Here is a 351-residue protein sequence, read N- to C-terminus: Anthranilate phosphoribosyltransferase (351 aa).

5-phospho-alpha-D-ribose 1-diphosphate is bound by residues Gly-80, Gly-83–Asp-84, Thr-88, Asn-90–Thr-93, Lys-108–Ser-116, and Ser-120. Residue Gly-80 participates in anthranilate binding. Mg(2+) is bound at residue Ser-92. Position 111 (Asn-111) interacts with anthranilate. Anthranilate is bound at residue Arg-166. 2 residues coordinate Mg(2+): Asp-229 and Glu-230.

It belongs to the anthranilate phosphoribosyltransferase family. In terms of assembly, homodimer. The cofactor is Mg(2+).

The enzyme catalyses N-(5-phospho-beta-D-ribosyl)anthranilate + diphosphate = 5-phospho-alpha-D-ribose 1-diphosphate + anthranilate. The protein operates within amino-acid biosynthesis; L-tryptophan biosynthesis; L-tryptophan from chorismate: step 2/5. In terms of biological role, catalyzes the transfer of the phosphoribosyl group of 5-phosphorylribose-1-pyrophosphate (PRPP) to anthranilate to yield N-(5'-phosphoribosyl)-anthranilate (PRA). The chain is Anthranilate phosphoribosyltransferase from Chlorobium chlorochromatii (strain CaD3).